Reading from the N-terminus, the 370-residue chain is Fe(2+) transport protein 2 (370 aa).

A signal peptide spans 1 to 25 (MMMSSSQTPVRIAFVFLVILAATDA). The Extracellular segment spans residues 26–55 (HSDHRTPPPACGGAAVGGECHSVARALRLK). A helical membrane pass occupies residues 56 to 76 (LIAIPAILAASVAGVCLPLFA). Residues 77 to 85 (RSVPALRPD) lie on the Cytoplasmic side of the membrane. A helical transmembrane segment spans residues 86–106 (GGLFAVVKAFASGVILGTGYM). The Extracellular portion of the chain corresponds to 107 to 130 (HVLPDSFNDLTSPCLPRKPWSEFP). A helical membrane pass occupies residues 131–151 (FAAFVAMLAAVFTLMVDSLML). At 152 to 215 (TFHTRGSKGR…TTKAQLLRNR (64 aa)) the chain is on the cytoplasmic side. A helical membrane pass occupies residues 216-236 (VIVQVLEMGIVVHSVVIGLGM). Residues 237 to 247 (GASQNVCTIRP) are Extracellular-facing. The chain crosses the membrane as a helical span at residues 248 to 268 (LVAALCFHQMFEGMGLGGCIL). Over 269–278 (QAGYGGRTRS) the chain is Cytoplasmic. A helical membrane pass occupies residues 279-299 (ALVFFFSTTTPFGIALGLALT). Residues 300–309 (RVYSDSSPTA) lie on the Extracellular side of the membrane. Residues 310 to 330 (LVVVGLLNAASAGLLHYMALV) form a helical membrane-spanning segment. Residues 331–349 (ELLAADFMGPKLQGNVRLQ) lie on the Cytoplasmic side of the membrane. The helical transmembrane segment at 350-370 (LAASLAILLGAGGMSVMAKWA) threads the bilayer.

This sequence belongs to the ZIP transporter (TC 2.A.5) family.

It is found in the cell membrane. Its function is as follows. Iron transporter that may play a role in the uptake of iron from the rhizosphere across the plasma membrane in the root epidermal layer. In Oryza sativa subsp. japonica (Rice), this protein is Fe(2+) transport protein 2 (IRT2).